We begin with the raw amino-acid sequence, 101 residues long: MVERLTGRERQQALQSIAGWREVEGRDAIARSFVFTDFNEAFGFMTRVALVAEKADHHPEWRNVYKTVEVVLTTHDAGGVTRRDIDLAAAMNAIAGQFGVA.

This sequence belongs to the pterin-4-alpha-carbinolamine dehydratase family.

It catalyses the reaction (4aS,6R)-4a-hydroxy-L-erythro-5,6,7,8-tetrahydrobiopterin = (6R)-L-erythro-6,7-dihydrobiopterin + H2O. The polypeptide is Putative pterin-4-alpha-carbinolamine dehydratase (Rhodopseudomonas palustris (strain HaA2)).